We begin with the raw amino-acid sequence, 482 residues long: Nucleoside triphosphate pyrophosphatase/Nudix hydrolase fusion protein (482 aa).

A maf-like region spans residues 1 to 299; the sequence is MSIPLILASK…DLWNVGRGEL (299 aa). Aspartate 167 functions as the Proton acceptor in the catalytic mechanism. In terms of domain architecture, Nudix hydrolase spans 338–475; the sequence is GTNGASGILL…TDWPRFAARL (138 aa).

It in the N-terminal section; belongs to the Maf family. The cofactor is a divalent metal cation.

Its subcellular location is the cytoplasm. The catalysed reaction is a ribonucleoside 5'-triphosphate + H2O = a ribonucleoside 5'-phosphate + diphosphate + H(+). The enzyme catalyses a 2'-deoxyribonucleoside 5'-triphosphate + H2O = a 2'-deoxyribonucleoside 5'-phosphate + diphosphate + H(+). Functionally, nucleoside triphosphate pyrophosphatase. May have a dual role in cell division arrest and in preventing the incorporation of modified nucleotides into cellular nucleic acids. In Bifidobacterium longum (strain NCC 2705), this protein is Nucleoside triphosphate pyrophosphatase/Nudix hydrolase fusion protein.